A 265-amino-acid chain; its full sequence is uncharacterized protein (265 aa).

Residues 3–23 form a helical; Signal-anchor for type II membrane protein membrane-spanning segment; it reads KKTWVYIIIAIIIILLLVWYF. N37 and N125 each carry an N-linked (GlcNAc...) asparagine; by host glycan. The stretch at 37–94 forms a coiled coil; that stretch reads NQTYNMLQQQISSLNQQILFLKQQISNLHVPAPTSTVNSLRQTVSDINQQVSTINNQI. A coiled-coil region spans residues 158-257; that stretch reads NVADNELNVL…KNSLGSAVRN (100 aa).

It is found in the host membrane. The protein resides in the virion. This is an uncharacterized protein from Acanthamoeba polyphaga (Amoeba).